Consider the following 168-residue polypeptide: Cyclic pyranopterin monophosphate synthase (168 aa).

Residues 75–77 (MCH) and 115–116 (ME) contribute to the substrate site. Aspartate 130 is an active-site residue.

This sequence belongs to the MoaC family. As to quaternary structure, homohexamer; trimer of dimers.

The enzyme catalyses (8S)-3',8-cyclo-7,8-dihydroguanosine 5'-triphosphate = cyclic pyranopterin phosphate + diphosphate. It participates in cofactor biosynthesis; molybdopterin biosynthesis. Functionally, catalyzes the conversion of (8S)-3',8-cyclo-7,8-dihydroguanosine 5'-triphosphate to cyclic pyranopterin monophosphate (cPMP). The polypeptide is Cyclic pyranopterin monophosphate synthase (Bacillus licheniformis (strain ATCC 14580 / DSM 13 / JCM 2505 / CCUG 7422 / NBRC 12200 / NCIMB 9375 / NCTC 10341 / NRRL NRS-1264 / Gibson 46)).